We begin with the raw amino-acid sequence, 273 residues long: MHDANIRVAIAGAGGRMGRQLIQAALALEGVQLGAALEREGSSLLGSDAGELAGAGKTGVTVQSSLDAIKDDFDVFIDFTRPEGTLNHLAFCRQHGKGMVIGTTGFDEAGKQAIRDAAADIAIVFAANFSVGVNVMLKLLEKAAKVMGDYTDIEIIEAHHRHKVDAPSGTALAMGEAIAHALDKDLKDCAVYSREGHTGERVPGTIGFATVRAGDIVGEHTAMFADIGERLEITHKASSRMTFANGAVRSALWLSGKENGLFDMRDVLDLNNL.

NAD(+) contacts are provided by residues 12-17 and Glu38; that span reads GAGGRM. Arg39 provides a ligand contact to NADP(+). Residues 102-104 and 126-129 contribute to the NAD(+) site; these read GTT and AANF. His159 serves as the catalytic Proton donor/acceptor. Residue His160 coordinates (S)-2,3,4,5-tetrahydrodipicolinate. The active-site Proton donor is Lys163. 169–170 is a (S)-2,3,4,5-tetrahydrodipicolinate binding site; sequence GT.

This sequence belongs to the DapB family. Homotetramer.

It is found in the cytoplasm. It catalyses the reaction (S)-2,3,4,5-tetrahydrodipicolinate + NAD(+) + H2O = (2S,4S)-4-hydroxy-2,3,4,5-tetrahydrodipicolinate + NADH + H(+). The enzyme catalyses (S)-2,3,4,5-tetrahydrodipicolinate + NADP(+) + H2O = (2S,4S)-4-hydroxy-2,3,4,5-tetrahydrodipicolinate + NADPH + H(+). The protein operates within amino-acid biosynthesis; L-lysine biosynthesis via DAP pathway; (S)-tetrahydrodipicolinate from L-aspartate: step 4/4. Functionally, catalyzes the conversion of 4-hydroxy-tetrahydrodipicolinate (HTPA) to tetrahydrodipicolinate. This is 4-hydroxy-tetrahydrodipicolinate reductase from Escherichia coli O157:H7.